The following is a 337-amino-acid chain: Ribosomal RNA small subunit methyltransferase C (337 aa).

Belongs to the methyltransferase superfamily. RsmC family. Monomer.

It is found in the cytoplasm. The enzyme catalyses guanosine(1207) in 16S rRNA + S-adenosyl-L-methionine = N(2)-methylguanosine(1207) in 16S rRNA + S-adenosyl-L-homocysteine + H(+). In terms of biological role, specifically methylates the guanine in position 1207 of 16S rRNA in the 30S particle. This is Ribosomal RNA small subunit methyltransferase C from Acinetobacter baumannii (strain ACICU).